Here is a 310-residue protein sequence, read N- to C-terminus: N-acetyl-gamma-glutamyl-phosphate reductase (310 aa).

Residue Cys-117 is part of the active site.

The protein belongs to the NAGSA dehydrogenase family. Type 2 subfamily.

It localises to the cytoplasm. The catalysed reaction is N-acetyl-L-glutamate 5-semialdehyde + phosphate + NADP(+) = N-acetyl-L-glutamyl 5-phosphate + NADPH + H(+). It participates in amino-acid biosynthesis; L-arginine biosynthesis; N(2)-acetyl-L-ornithine from L-glutamate: step 3/4. Catalyzes the NADPH-dependent reduction of N-acetyl-5-glutamyl phosphate to yield N-acetyl-L-glutamate 5-semialdehyde. The protein is N-acetyl-gamma-glutamyl-phosphate reductase of Rhizobium etli (strain CIAT 652).